A 155-amino-acid chain; its full sequence is Ribonuclease H (155 aa).

Residues 4 to 145 (ETKVIEIYTD…ADALARKAIT (142 aa)) enclose the RNase H type-1 domain. Residues D13, E51, D73, and D137 each contribute to the Mg(2+) site.

It belongs to the RNase H family. As to quaternary structure, monomer. Mg(2+) serves as cofactor.

Its subcellular location is the cytoplasm. It catalyses the reaction Endonucleolytic cleavage to 5'-phosphomonoester.. In terms of biological role, endonuclease that specifically degrades the RNA of RNA-DNA hybrids. The chain is Ribonuclease H from Bartonella bacilliformis (strain ATCC 35685 / KC583 / Herrer 020/F12,63).